The chain runs to 118 residues: Large ribosomal subunit protein bL20 (118 aa).

Belongs to the bacterial ribosomal protein bL20 family.

Its function is as follows. Binds directly to 23S ribosomal RNA and is necessary for the in vitro assembly process of the 50S ribosomal subunit. It is not involved in the protein synthesizing functions of that subunit. This Staphylococcus carnosus (strain TM300) protein is Large ribosomal subunit protein bL20.